Here is a 47-residue protein sequence, read N- to C-terminus: Delta-halcutoxin-Hcg1a (47 aa).

3 disulfides stabilise this stretch: cysteine 3-cysteine 43, cysteine 5-cysteine 33, and cysteine 26-cysteine 44.

Belongs to the sea anemone sodium channel inhibitory toxin family. Type II subfamily.

Its subcellular location is the secreted. It is found in the nematocyst. Its function is as follows. Is potently lethal to crabs, although it showed neither lethal activity in mice nor hemolytic activity. May bind to voltage-gated sodium channels (Nav), thereby delaying their inactivation during signal transduction. The protein is Delta-halcutoxin-Hcg1a of Isohalcurias carlgreni (Sea anemone).